A 61-amino-acid polypeptide reads, in one-letter code: Small ribosomal subunit protein uS14 (61 aa).

Residues Cys-24, Cys-27, Cys-40, and Cys-43 each contribute to the Zn(2+) site.

The protein belongs to the universal ribosomal protein uS14 family. Zinc-binding uS14 subfamily. Part of the 30S ribosomal subunit. Contacts proteins S3 and S10. Zn(2+) serves as cofactor.

In terms of biological role, binds 16S rRNA, required for the assembly of 30S particles and may also be responsible for determining the conformation of the 16S rRNA at the A site. The polypeptide is Small ribosomal subunit protein uS14 (Thermoanaerobacter sp. (strain X514)).